A 134-amino-acid polypeptide reads, in one-letter code: Large ribosomal subunit protein bL20 (134 aa).

Belongs to the bacterial ribosomal protein bL20 family.

Functionally, binds directly to 23S ribosomal RNA and is necessary for the in vitro assembly process of the 50S ribosomal subunit. It is not involved in the protein synthesizing functions of that subunit. The chain is Large ribosomal subunit protein bL20 from Allorhizobium ampelinum (strain ATCC BAA-846 / DSM 112012 / S4) (Agrobacterium vitis (strain S4)).